Here is a 120-residue protein sequence, read N- to C-terminus: Cytochrome c2 iso-1 (120 aa).

Position 1 is a pyrrolidone carboxylic acid (Gln-1). Positions 15, 18, 19, and 98 each coordinate heme c.

Belongs to the cytochrome c family. Binds 1 heme c group covalently per subunit.

Cytochrome c2 is found mainly in purple, non-sulfur, photosynthetic bacteria where it functions as the electron donor to the oxidized bacteriochlorophyll in the photophosphorylation pathway. However, it may also have a role in the respiratory chain and is found in some non-photosynthetic bacteria. This is Cytochrome c2 iso-1 from Rhodospirillum centenum (Rhodocista centenaria).